The sequence spans 162 residues: MAETNRAVIKLREKFSASVLDVKEFRGEVTVTVKREDIVEICNFLKSSLAYNLCTDVTAVDYLGKQEPRFMVVYNLYSIPNKDRLRVKAGVPEAGCSIDTVSCVWSAANWLEREVYDLMGVVFNNHPDLRRILMTDDWVGHPLRKDYPLQGPGREPYKGRLS.

It belongs to the complex I 30 kDa subunit family. In terms of assembly, NDH-1 is composed of 14 different subunits. Subunits NuoB, C, D, E, F, and G constitute the peripheral sector of the complex.

The protein resides in the cell inner membrane. The enzyme catalyses a quinone + NADH + 5 H(+)(in) = a quinol + NAD(+) + 4 H(+)(out). Its function is as follows. NDH-1 shuttles electrons from NADH, via FMN and iron-sulfur (Fe-S) centers, to quinones in the respiratory chain. The immediate electron acceptor for the enzyme in this species is believed to be ubiquinone. Couples the redox reaction to proton translocation (for every two electrons transferred, four hydrogen ions are translocated across the cytoplasmic membrane), and thus conserves the redox energy in a proton gradient. This is NADH-quinone oxidoreductase subunit C from Geobacter metallireducens (strain ATCC 53774 / DSM 7210 / GS-15).